Consider the following 518-residue polypeptide: Glutamate--cysteine ligase (518 aa).

Belongs to the glutamate--cysteine ligase type 1 family. Type 1 subfamily.

The catalysed reaction is L-cysteine + L-glutamate + ATP = gamma-L-glutamyl-L-cysteine + ADP + phosphate + H(+). It functions in the pathway sulfur metabolism; glutathione biosynthesis; glutathione from L-cysteine and L-glutamate: step 1/2. This is Glutamate--cysteine ligase from Shigella boydii serotype 18 (strain CDC 3083-94 / BS512).